The following is a 446-amino-acid chain: Cobalamin biosynthesis protein CbiHC (446 aa).

Residues 1-246 (MLLLPSRGKL…MFTPRGYSNK (246 aa)) form a cobalt-factor III C(17)-methyltransferase region. Positions 247–446 (YNIGEKRRAE…CLIEHADRPD (200 aa)) are cobalt-precorrin-8 methylmutase.

The protein in the N-terminal section; belongs to the precorrin methyltransferase family. In the C-terminal section; belongs to the CobH family.

The catalysed reaction is Co(II)-factor III + S-adenosyl-L-methionine + H(+) = Co(II)-factor IV + S-adenosyl-L-homocysteine. The enzyme catalyses Co-precorrin-8X = cob(II)yrinate. It participates in cofactor biosynthesis; adenosylcobalamin biosynthesis; cob(II)yrinate a,c-diamide from sirohydrochlorin (anaerobic route): step 3/10. It functions in the pathway cofactor biosynthesis; adenosylcobalamin biosynthesis; cob(II)yrinate a,c-diamide from sirohydrochlorin (anaerobic route): step 9/10. Functionally, bifunctional enzyme with a methyltransferase domain that catalyzes the ring contraction and methylation of C-17 in cobalt-factor III to form cobalt-factor IV, and an isomerase domain that catalyzes the conversion of cobalt-precorrin-8 to cobyrinate. The polypeptide is Cobalamin biosynthesis protein CbiHC (cbiHC) (Archaeoglobus fulgidus (strain ATCC 49558 / DSM 4304 / JCM 9628 / NBRC 100126 / VC-16)).